A 467-amino-acid polypeptide reads, in one-letter code: Dimethylamine methyltransferase MtbB1 (467 aa).

Position 356 (Pyl-356) is a non-standard amino acid, pyrrolysine.

Belongs to the dimethylamine methyltransferase family.

It catalyses the reaction Co(I)-[dimethylamine-specific corrinoid protein] + dimethylamine + H(+) = methyl-Co(III)-[dimethylamine-specific corrinoid protein] + methylamine. Its pathway is one-carbon metabolism; methanogenesis from dimethylamine. Functionally, catalyzes the transfer of a methyl group from dimethylamine to the corrinoid cofactor of MtbC. This is Dimethylamine methyltransferase MtbB1 (mtbB1) from Methanosarcina acetivorans (strain ATCC 35395 / DSM 2834 / JCM 12185 / C2A).